The following is a 554-amino-acid chain: Malate synthase 2 (554 aa).

Catalysis depends on arginine 177, which acts as the Proton acceptor. Aspartate 457 (proton donor) is an active-site residue. Residues 552–554 (SKL) carry the SKL peroxisome targeting motif motif.

It belongs to the malate synthase family. Interacts with PEX9.

The protein resides in the peroxisome matrix. It catalyses the reaction glyoxylate + acetyl-CoA + H2O = (S)-malate + CoA + H(+). Allantoin metabolism-specific malate synthase involved in the recycling the glyoxylate generated during allantoin degradation by the ureidoglycollate (UG) hydrolase reaction. The protein is Malate synthase 2 of Saccharomyces cerevisiae (strain ATCC 204508 / S288c) (Baker's yeast).